The following is a 373-amino-acid chain: MNGERLLACIKQCIMQHFQPMVYDESRCVIETTRGTFPVPDNYKKYKTLAFAFVGHVLNTDDTPVIEKELDWPDPALVYNTIVDRIINHPELSQFISVAFISQLKATIGEGLDINVKGTLNRRGKGIRRPKGVFFRYMESPFVNTKVTAFFSYLRDYNKIASEYHNNTKFILTFSCQAYWASGPNFSALKNVIRCSIIHEYISKFVEREQDKGHIGDQELPPEEDPSRELNNVQHEVNSLTEQDAEADEGLWGEIDSLCEKWQSEAEDQTEAEIIADRIIGNSQRMANLKIRRTKFKSVLYHILKELIQSQGTVKVYRGSSFSHDSIKISLHYEEQHITAVWVYLTVKFEEHWKPVDVEVEFRCKFKERKVDG.

The interaction with REP2 stretch occupies residues 1-76 (MNGERLLACI…EKELDWPDPA (76 aa)). Residues 1–129 (MNGERLLACI…LNRRGKGIRR (129 aa)) are interaction with REP2 and self-association. Residues 349 to 373 (FEEHWKPVDVEVEFRCKFKERKVDG) form a nuclear localization region.

In terms of assembly, interacts with REP2.

Its subcellular location is the nucleus. Functionally, part of the plasmid partitioning system, which ensures the equal distribution of replicated plasmid molecules to daughter cells. The plasmids exist as well-organized plasmid foci within the nucleus that stay together throughout the cell-cycle and act as entity during segregation, effetively reducing copy number to one. Plasmid partitioning requires the proteins REP1, REP2, and a cis-acting locus STB (REP3). REP1-REP2 stably associate with CSE4-containing chromatin at STB during S-phase, marking the locus with a centromeric tag, and thereby probably catching mitotic spindle microtubules to the plasmid cluster and coupling plasmid segregation to chromosome segregation. REP1-REP2 are required to recruit the cohesin complex to the STB locus for pairing of the replicated plasmid cluster, a prerequisite for successful plasmid segregation. REP1-REP2 also negatively regulate expression of site-specific recombinase FLP and of RAF1. This is Partitioning protein REP1 (REP1) from Saccharomyces cerevisiae (strain ATCC 204508 / S288c) (Baker's yeast).